The following is a 66-amino-acid chain: Cysteine proteinase inhibitor (66 aa).

The short motif at 18–22 (QVVAG) is the Secondary area of contact element.

Belongs to the cystatin family. Phytocystatin subfamily. In terms of tissue distribution, in tubers of untreated plants. After ABA treatment or mechanical wounding is mostly accumulated in leaves, to a lesser extent in stems, but not in roots.

The sequence is that of Cysteine proteinase inhibitor (CYS-PIN) from Solanum tuberosum (Potato).